Reading from the N-terminus, the 365-residue chain is Transcription elongation factor, mitochondrial (365 aa).

The transit peptide at 1-40 (MAWRANLACLIKAGGRTRWFPLPEYLSMSPVLHNTCSRRK) directs the protein to the mitochondrion.

It belongs to the TEFM family. As to quaternary structure, interacts with POLRMT.

The protein resides in the mitochondrion matrix. The protein localises to the mitochondrion nucleoid. Its function is as follows. Transcription elongation factor which increases mitochondrial RNA polymerase processivity. Regulates transcription of the mitochondrial genome, including genes important for the oxidative phosphorylation machinery. This Rattus norvegicus (Rat) protein is Transcription elongation factor, mitochondrial (Tefm).